Reading from the N-terminus, the 482-residue chain is Variant surface glycoprotein ANTAT 1.1C (482 aa).

Positions 1-8 (LHPQQALA) are cleaved as a signal peptide. Intrachain disulfides connect Cys-24-Cys-151 and Cys-133-Cys-188. Asn-92 carries N-linked (GlcNAc...) asparagine glycosylation. N-linked (GlcNAc...) asparagine glycans are attached at residues Asn-398 and Asn-411. Asp-459 is lipidated: GPI-anchor amidated aspartate. Residues 460–482 (SSILVTKKFALSLVSAAFASLLF) constitute a propeptide, removed in mature form.

Its subcellular location is the cell membrane. Its function is as follows. VSG forms a coat on the surface of the parasite. The trypanosome evades the immune response of the host by expressing a series of antigenically distinct VSGs from an estimated 1000 VSG genes. The sequence is that of Variant surface glycoprotein ANTAT 1.1C from Trypanosoma brucei brucei.